The sequence spans 582 residues: DNA primase (582 aa).

Residues 40–64 form a CHC2-type zinc finger; that stretch reads CPFHHEKTPSFTVSQKKQFYHCFGC. One can recognise a Toprim domain in the interval 259–341; that stretch reads EMLLVVEGYM…GRQLKFVFLP (83 aa). Residues glutamate 265, aspartate 309, and aspartate 311 each contribute to the Mg(2+) site.

Belongs to the DnaG primase family. Monomer. Interacts with DnaB. Zn(2+) is required as a cofactor. It depends on Mg(2+) as a cofactor.

It carries out the reaction ssDNA + n NTP = ssDNA/pppN(pN)n-1 hybrid + (n-1) diphosphate.. Its function is as follows. RNA polymerase that catalyzes the synthesis of short RNA molecules used as primers for DNA polymerase during DNA replication. The polypeptide is DNA primase (Pasteurella multocida (strain Pm70)).